Here is a 122-residue protein sequence, read N- to C-terminus: Large ribosomal subunit protein uL14 (122 aa).

Belongs to the universal ribosomal protein uL14 family. As to quaternary structure, part of the 50S ribosomal subunit. Forms a cluster with proteins L3 and L19. In the 70S ribosome, L14 and L19 interact and together make contacts with the 16S rRNA in bridges B5 and B8.

In terms of biological role, binds to 23S rRNA. Forms part of two intersubunit bridges in the 70S ribosome. The protein is Large ribosomal subunit protein uL14 of Variovorax paradoxus (strain S110).